Consider the following 220-residue polypeptide: Glutathione S-transferase U26 (220 aa).

A GST N-terminal domain is found at 4-83 (DQVILLDYWP…YIDEVWSDAS (80 aa)). Glutathione-binding positions include 14–15 (SM), 40–41 (VK), 54–55 (KI), and 67–68 (ES). The GST C-terminal domain maps to 89-210 (DPYQKSRARF…ADSDRIIEYV (122 aa)).

It belongs to the GST superfamily. Tau family.

Its subcellular location is the cytoplasm. The protein resides in the cytosol. It carries out the reaction RX + glutathione = an S-substituted glutathione + a halide anion + H(+). Its function is as follows. In vitro, possesses glutathione S-transferase activity toward 1-chloro-2,4-dinitrobenzene (CDNB). May be involved in the conjugation of reduced glutathione to a wide number of exogenous and endogenous hydrophobic electrophiles and have a detoxification role against certain herbicides. This Arabidopsis thaliana (Mouse-ear cress) protein is Glutathione S-transferase U26 (GSTU26).